A 472-amino-acid polypeptide reads, in one-letter code: Aspartyl/glutamyl-tRNA(Asn/Gln) amidotransferase subunit B (472 aa).

This sequence belongs to the GatB/GatE family. GatB subfamily. Heterotrimer of A, B and C subunits.

The catalysed reaction is L-glutamyl-tRNA(Gln) + L-glutamine + ATP + H2O = L-glutaminyl-tRNA(Gln) + L-glutamate + ADP + phosphate + H(+). It catalyses the reaction L-aspartyl-tRNA(Asn) + L-glutamine + ATP + H2O = L-asparaginyl-tRNA(Asn) + L-glutamate + ADP + phosphate + 2 H(+). Functionally, allows the formation of correctly charged Asn-tRNA(Asn) or Gln-tRNA(Gln) through the transamidation of misacylated Asp-tRNA(Asn) or Glu-tRNA(Gln) in organisms which lack either or both of asparaginyl-tRNA or glutaminyl-tRNA synthetases. The reaction takes place in the presence of glutamine and ATP through an activated phospho-Asp-tRNA(Asn) or phospho-Glu-tRNA(Gln). This is Aspartyl/glutamyl-tRNA(Asn/Gln) amidotransferase subunit B from Sulfolobus acidocaldarius (strain ATCC 33909 / DSM 639 / JCM 8929 / NBRC 15157 / NCIMB 11770).